We begin with the raw amino-acid sequence, 218 residues long: Pyridoxine/pyridoxamine 5'-phosphate oxidase (218 aa).

Residues 14-17 (RREY) and Lys-72 each bind substrate. FMN is bound by residues 67-72 (RIVLLK), 82-83 (YT), Arg-88, Lys-89, and Gln-111. Substrate is bound by residues Tyr-129, Arg-133, and Ser-137. Residues 146 to 147 (QS) and Trp-191 each bind FMN. 197–199 (RLH) provides a ligand contact to substrate. Arg-201 contacts FMN.

This sequence belongs to the pyridoxamine 5'-phosphate oxidase family. Homodimer. FMN serves as cofactor.

The enzyme catalyses pyridoxamine 5'-phosphate + O2 + H2O = pyridoxal 5'-phosphate + H2O2 + NH4(+). The catalysed reaction is pyridoxine 5'-phosphate + O2 = pyridoxal 5'-phosphate + H2O2. Its pathway is cofactor metabolism; pyridoxal 5'-phosphate salvage; pyridoxal 5'-phosphate from pyridoxamine 5'-phosphate: step 1/1. The protein operates within cofactor metabolism; pyridoxal 5'-phosphate salvage; pyridoxal 5'-phosphate from pyridoxine 5'-phosphate: step 1/1. Functionally, catalyzes the oxidation of either pyridoxine 5'-phosphate (PNP) or pyridoxamine 5'-phosphate (PMP) into pyridoxal 5'-phosphate (PLP). The polypeptide is Pyridoxine/pyridoxamine 5'-phosphate oxidase (Escherichia coli O127:H6 (strain E2348/69 / EPEC)).